The following is a 481-amino-acid chain: Phenylalanine--tRNA ligase alpha subunit (481 aa).

L-phenylalanine contacts are provided by residues Thr322, 361–363, and Tyr401; that span reads QLE. Glu403 lines the Mg(2+) pocket. An L-phenylalanine-binding site is contributed by Phe426.

It belongs to the class-II aminoacyl-tRNA synthetase family. Phe-tRNA synthetase alpha subunit type 2 subfamily. In terms of assembly, tetramer of two alpha and two beta subunits. The cofactor is Mg(2+).

It localises to the cytoplasm. The enzyme catalyses tRNA(Phe) + L-phenylalanine + ATP = L-phenylalanyl-tRNA(Phe) + AMP + diphosphate + H(+). The polypeptide is Phenylalanine--tRNA ligase alpha subunit (Methanoculleus marisnigri (strain ATCC 35101 / DSM 1498 / JR1)).